The chain runs to 95 residues: Large ribosomal subunit protein uL23 (95 aa).

The protein belongs to the universal ribosomal protein uL23 family. In terms of assembly, part of the 50S ribosomal subunit. Contacts protein L29, and trigger factor when it is bound to the ribosome.

Its function is as follows. One of the early assembly proteins it binds 23S rRNA. One of the proteins that surrounds the polypeptide exit tunnel on the outside of the ribosome. Forms the main docking site for trigger factor binding to the ribosome. The protein is Large ribosomal subunit protein uL23 of Levilactobacillus brevis (strain ATCC 367 / BCRC 12310 / CIP 105137 / JCM 1170 / LMG 11437 / NCIMB 947 / NCTC 947) (Lactobacillus brevis).